A 187-amino-acid polypeptide reads, in one-letter code: Interferon alpha-1/2 (187 aa).

Positions 1–23 (MALPCSFSVALVLLSCHSLCCLA) are cleaved as a signal peptide. 2 cysteine pairs are disulfide-bonded: cysteine 24-cysteine 122 and cysteine 52-cysteine 160. Asparagine 101 is a glycosylation site (N-linked (GlcNAc...) asparagine).

It belongs to the alpha/beta interferon family.

The protein resides in the secreted. Its function is as follows. Produced by macrophages, IFN-alpha have antiviral activities. Interferon stimulates the production of two enzymes: a protein kinase and an oligoadenylate synthetase. The sequence is that of Interferon alpha-1/2 from Canis lupus familiaris (Dog).